A 322-amino-acid chain; its full sequence is Corticotropin-releasing factor-binding protein (322 aa).

Positions 1–24 (MSPNFKLQCHFILIFLTALRGESR) are cleaved as a signal peptide. Cystine bridges form between C60-C81, C104-C141, C183-C205, C237-C264, and C277-C318. N204 carries an N-linked (GlcNAc...) asparagine glycan.

The protein belongs to the CRF-binding protein family.

It localises to the secreted. In terms of biological role, binds CRF and inactivates it. May prevent inappropriate pituitary-adrenal stimulation in pregnancy. In Homo sapiens (Human), this protein is Corticotropin-releasing factor-binding protein (CRHBP).